We begin with the raw amino-acid sequence, 252 residues long: 4-hydroxy-tetrahydrodipicolinate reductase (252 aa).

NAD(+) is bound by residues 8-13, 85-87, and 109-112; these read GCSGKM, CTT, and SANM. The active-site Proton donor/acceptor is the H142. Residue H143 participates in (S)-2,3,4,5-tetrahydrodipicolinate binding. K146 functions as the Proton donor in the catalytic mechanism. 152–153 provides a ligand contact to (S)-2,3,4,5-tetrahydrodipicolinate; the sequence is GT.

It belongs to the DapB family.

The protein localises to the cytoplasm. The catalysed reaction is (S)-2,3,4,5-tetrahydrodipicolinate + NAD(+) + H2O = (2S,4S)-4-hydroxy-2,3,4,5-tetrahydrodipicolinate + NADH + H(+). It catalyses the reaction (S)-2,3,4,5-tetrahydrodipicolinate + NADP(+) + H2O = (2S,4S)-4-hydroxy-2,3,4,5-tetrahydrodipicolinate + NADPH + H(+). Its pathway is amino-acid biosynthesis; L-lysine biosynthesis via DAP pathway; (S)-tetrahydrodipicolinate from L-aspartate: step 4/4. In terms of biological role, catalyzes the conversion of 4-hydroxy-tetrahydrodipicolinate (HTPA) to tetrahydrodipicolinate. This is 4-hydroxy-tetrahydrodipicolinate reductase from Clostridium novyi (strain NT).